The sequence spans 270 residues: Electron transfer flavoprotein subunit beta (270 aa).

The protein belongs to the ETF alpha-subunit/FixB family. In terms of assembly, heterodimer of an alpha and a beta subunit. Requires FAD as cofactor.

In terms of biological role, the electron transfer flavoprotein serves as a specific electron acceptor for other dehydrogenases. It transfers the electrons to the main respiratory chain via ETF-ubiquinone oxidoreductase (ETF dehydrogenase). This Megasphaera elsdenii protein is Electron transfer flavoprotein subunit beta (etfB).